The following is an 82-amino-acid chain: Sulfur carrier protein TusA (82 aa).

Cys19 functions as the Cysteine persulfide intermediate in the catalytic mechanism.

Belongs to the sulfur carrier protein TusA family.

Its subcellular location is the cytoplasm. In terms of biological role, sulfur carrier protein which probably makes part of a sulfur-relay system. This Vibrio cholerae serotype O1 (strain ATCC 39541 / Classical Ogawa 395 / O395) protein is Sulfur carrier protein TusA.